A 166-amino-acid polypeptide reads, in one-letter code: Ribosome maturation factor RimM (166 aa).

In terms of domain architecture, PRC barrel spans 91-165 (DDEFYHADLI…RIVADPPEGL (75 aa)).

It belongs to the RimM family. In terms of assembly, binds ribosomal protein uS19.

It localises to the cytoplasm. An accessory protein needed during the final step in the assembly of 30S ribosomal subunit, possibly for assembly of the head region. Essential for efficient processing of 16S rRNA. May be needed both before and after RbfA during the maturation of 16S rRNA. It has affinity for free ribosomal 30S subunits but not for 70S ribosomes. The polypeptide is Ribosome maturation factor RimM (Dinoroseobacter shibae (strain DSM 16493 / NCIMB 14021 / DFL 12)).